Here is a 134-residue protein sequence, read N- to C-terminus: Large-conductance mechanosensitive channel (134 aa).

A run of 2 helical transmembrane segments spans residues 16–36 and 81–101; these read VIDL…VTAL and GDFL…FIIV.

This sequence belongs to the MscL family. Homopentamer.

The protein localises to the cell inner membrane. Channel that opens in response to stretch forces in the membrane lipid bilayer. May participate in the regulation of osmotic pressure changes within the cell. The chain is Large-conductance mechanosensitive channel from Xylella fastidiosa (strain M12).